A 355-amino-acid polypeptide reads, in one-letter code: Guanine nucleotide-binding protein G(i) subunit alpha-2 (355 aa).

Gly-2 carries N-myristoyl glycine lipidation. Cys-3 is lipidated: S-palmitoyl cysteine. In terms of domain architecture, G-alpha spans 32–355 (REVKLLLLGA…KNNLKDCGLF (324 aa)). Residues 35–48 (KLLLLGAGESGKST) form a G1 motif region. GTP contacts are provided by residues 40-47 (GAGESGKS), 176-182 (LRTRVKT), 201-205 (DVGGQ), 270-273 (NKKD), and Ala-327. Mg(2+)-binding residues include Ser-47 and Thr-182. The interval 174 to 182 (DVLRTRVKT) is G2 motif. The segment at 197 to 206 (FKMFDVGGQR) is G3 motif. The tract at residues 266-273 (ILFLNKKD) is G4 motif. A G5 motif region spans residues 325–330 (TCATDT).

The protein belongs to the G-alpha family. G(i/o/t/z) subfamily. As to quaternary structure, g proteins are composed of 3 units; alpha, beta and gamma. The alpha chain contains the guanine nucleotide binding site. In this context, interacts with GNB2. Interacts with UNC5B. Interacts with GPSM1. Interacts with RGS12 and RGS14. Interacts (inactive GDP-bound form) with NUCB1 (via GBA motif); the interaction leads to activation of GNAI3. Interacts (inactive GDP-bound form) with CCDC88C/DAPLE (via GBA motif). Interacts (inactive GDP-bound form) with CCDC8A/GIV (via GBA motif). In terms of tissue distribution, ubiquitously expressed. Most abundant in the lung and in the spleen.

Its subcellular location is the cytoplasm. The protein localises to the cytoskeleton. It is found in the microtubule organizing center. The protein resides in the centrosome. It localises to the cell membrane. Its subcellular location is the membrane. In terms of biological role, guanine nucleotide-binding proteins (G proteins) are involved as modulators or transducers in various transmembrane signaling systems. The G(i) proteins are involved in hormonal regulation of adenylate cyclase: they inhibit the cyclase in response to beta-adrenergic stimuli. May play a role in cell division. The sequence is that of Guanine nucleotide-binding protein G(i) subunit alpha-2 (GNAI2) from Cavia porcellus (Guinea pig).